Reading from the N-terminus, the 88-residue chain is UPF0297 protein BLi02868/BL02032 (88 aa).

Belongs to the UPF0297 family.

This Bacillus licheniformis (strain ATCC 14580 / DSM 13 / JCM 2505 / CCUG 7422 / NBRC 12200 / NCIMB 9375 / NCTC 10341 / NRRL NRS-1264 / Gibson 46) protein is UPF0297 protein BLi02868/BL02032.